The chain runs to 256 residues: Imidazole glycerol phosphate synthase subunit HisF (256 aa).

Residues aspartate 12 and aspartate 131 contribute to the active site.

The protein belongs to the HisA/HisF family. In terms of assembly, heterodimer of HisH and HisF.

Its subcellular location is the cytoplasm. The catalysed reaction is 5-[(5-phospho-1-deoxy-D-ribulos-1-ylimino)methylamino]-1-(5-phospho-beta-D-ribosyl)imidazole-4-carboxamide + L-glutamine = D-erythro-1-(imidazol-4-yl)glycerol 3-phosphate + 5-amino-1-(5-phospho-beta-D-ribosyl)imidazole-4-carboxamide + L-glutamate + H(+). It functions in the pathway amino-acid biosynthesis; L-histidine biosynthesis; L-histidine from 5-phospho-alpha-D-ribose 1-diphosphate: step 5/9. IGPS catalyzes the conversion of PRFAR and glutamine to IGP, AICAR and glutamate. The HisF subunit catalyzes the cyclization activity that produces IGP and AICAR from PRFAR using the ammonia provided by the HisH subunit. The polypeptide is Imidazole glycerol phosphate synthase subunit HisF (Beutenbergia cavernae (strain ATCC BAA-8 / DSM 12333 / CCUG 43141 / JCM 11478 / NBRC 16432 / NCIMB 13614 / HKI 0122)).